A 522-amino-acid chain; its full sequence is L-aspartate oxidase (522 aa).

FAD is bound by residues 16 to 19 (SGMA) and 45 to 52 (SSAWAQGG). Arginine 277 functions as the Proton donor/acceptor in the catalytic mechanism. FAD-binding positions include glutamate 360 and 376-377 (SL).

The protein belongs to the FAD-dependent oxidoreductase 2 family. NadB subfamily. The cofactor is FAD.

The protein resides in the cytoplasm. It catalyses the reaction L-aspartate + O2 = iminosuccinate + H2O2. The protein operates within cofactor biosynthesis; NAD(+) biosynthesis; iminoaspartate from L-aspartate (oxidase route): step 1/1. Its function is as follows. Catalyzes the oxidation of L-aspartate to iminoaspartate, the first step in the de novo biosynthesis of NAD(+). This is L-aspartate oxidase (nadB) from Agrobacterium fabrum (strain C58 / ATCC 33970) (Agrobacterium tumefaciens (strain C58)).